Reading from the N-terminus, the 1374-residue chain is Alpha,alpha-trehalose-phosphate synthase [UDP-forming] 1 (1374 aa).

3 disordered regions span residues 28–66, 86–117, and 1352–1374; these read DTGK…SDKD, YTPG…DDEG, and KADS…SKQQ. 2 stretches are compositionally biased toward basic and acidic residues: residues 56–66 and 86–95; these read DPFDRPKSDKD and YTPGKEKGVD. 2 stretches are compositionally biased toward acidic residues: residues 96–109 and 1356–1368; these read QDES…EDHD and YYDD…DQED.

In the N-terminal section; belongs to the glycosyltransferase 20 family. This sequence in the C-terminal section; belongs to the gob-1 trehalose phosphatase family.

It carries out the reaction D-glucose 6-phosphate + UDP-alpha-D-glucose = alpha,alpha-trehalose 6-phosphate + UDP + H(+). Catalyzes the production of trehalose from glucose-6-phosphate and UDP-alpha-D-glucose in a 2 step process. The protein is Alpha,alpha-trehalose-phosphate synthase [UDP-forming] 1 (tps-1) of Caenorhabditis briggsae.